The primary structure comprises 399 residues: Calsequestrin-2 (399 aa).

Residues 1–19 form the signal peptide; the sequence is MKRTHLFIVGIYFLSSCRA. Phosphotyrosine is present on Tyr282. Residue Asn335 is glycosylated (N-linked (GlcNAc...) asparagine). A disordered region spans residues 365-399; the sequence is VLSGKINTEDDDEDDDDDDNSDEEDNDDSDDDDDE. Residues 373 to 399 show a composition bias toward acidic residues; sequence EDDDEDDDDDDNSDEEDNDDSDDDDDE. Residues Ser385 and Ser393 each carry the phosphoserine modification.

Belongs to the calsequestrin family. In terms of assembly, monomer, homodimer and homooligomer. Mostly monomeric in the absence of calcium. Forms higher oligomers in a calcium-dependent manner. Dimers associate to form tetramers, that then form linear homomer chains. Interacts with ASPH and TRDN. In terms of processing, phosphorylation in the C-terminus, probably by CK2, moderately increases calcium buffering capacity. Post-translationally, N-glycosylated.

The protein localises to the sarcoplasmic reticulum lumen. In terms of biological role, calsequestrin is a high-capacity, moderate affinity, calcium-binding protein and thus acts as an internal calcium store in muscle. Calcium ions are bound by clusters of acidic residues at the protein surface, especially at the interface between subunits. Can bind around 60 Ca(2+) ions. Regulates the release of lumenal Ca(2+) via the calcium release channel RYR2; this plays an important role in triggering muscle contraction. Plays a role in excitation-contraction coupling in the heart and in regulating the rate of heart beats. The polypeptide is Calsequestrin-2 (CASQ2) (Homo sapiens (Human)).